A 425-amino-acid polypeptide reads, in one-letter code: Serine--tRNA ligase (425 aa).

230-232 (TAE) serves as a coordination point for L-serine. 261-263 (RSE) serves as a coordination point for ATP. Glutamate 284 lines the L-serine pocket. 348 to 351 (EISS) provides a ligand contact to ATP. Serine 384 contributes to the L-serine binding site.

It belongs to the class-II aminoacyl-tRNA synthetase family. Type-1 seryl-tRNA synthetase subfamily. As to quaternary structure, homodimer. The tRNA molecule binds across the dimer.

The protein localises to the cytoplasm. It catalyses the reaction tRNA(Ser) + L-serine + ATP = L-seryl-tRNA(Ser) + AMP + diphosphate + H(+). It carries out the reaction tRNA(Sec) + L-serine + ATP = L-seryl-tRNA(Sec) + AMP + diphosphate + H(+). It participates in aminoacyl-tRNA biosynthesis; selenocysteinyl-tRNA(Sec) biosynthesis; L-seryl-tRNA(Sec) from L-serine and tRNA(Sec): step 1/1. Functionally, catalyzes the attachment of serine to tRNA(Ser). Is also able to aminoacylate tRNA(Sec) with serine, to form the misacylated tRNA L-seryl-tRNA(Sec), which will be further converted into selenocysteinyl-tRNA(Sec). This Streptococcus gordonii (strain Challis / ATCC 35105 / BCRC 15272 / CH1 / DL1 / V288) protein is Serine--tRNA ligase.